Here is a 350-residue protein sequence, read N- to C-terminus: Hydroxymethylglutaryl-CoA synthase (350 aa).

The Proton donor/acceptor role is filled by glutamate 83. Cysteine 115 acts as the Acyl-thioester intermediate in catalysis. Positions 115 and 156 each coordinate (3S)-3-hydroxy-3-methylglutaryl-CoA. CoA is bound at residue arginine 204. Residues threonine 206 and histidine 239 each coordinate (3S)-3-hydroxy-3-methylglutaryl-CoA. Histidine 239 (proton donor/acceptor) is an active-site residue. Lysine 244 provides a ligand contact to CoA. The (3S)-3-hydroxy-3-methylglutaryl-CoA site is built by asparagine 271 and serine 301.

The protein belongs to the thiolase-like superfamily. Archaeal HMG-CoA synthase family. Interacts with acetoacetyl-CoA thiolase that catalyzes the precedent step in the pathway and with a DUF35 protein. The acetoacetyl-CoA thiolase/HMG-CoA synthase complex channels the intermediate via a fused CoA-binding site, which allows for efficient coupling of the endergonic thiolase reaction with the exergonic HMGCS reaction.

It carries out the reaction acetoacetyl-CoA + acetyl-CoA + H2O = (3S)-3-hydroxy-3-methylglutaryl-CoA + CoA + H(+). It functions in the pathway metabolic intermediate biosynthesis; (R)-mevalonate biosynthesis; (R)-mevalonate from acetyl-CoA: step 2/3. In terms of biological role, catalyzes the condensation of acetyl-CoA with acetoacetyl-CoA to form 3-hydroxy-3-methylglutaryl-CoA (HMG-CoA). Functions in the mevalonate (MVA) pathway leading to isopentenyl diphosphate (IPP), a key precursor for the biosynthesis of isoprenoid compounds that are building blocks of archaeal membrane lipids. This is Hydroxymethylglutaryl-CoA synthase from Thermococcus gammatolerans (strain DSM 15229 / JCM 11827 / EJ3).